The following is a 192-amino-acid chain: Shikimate kinase (192 aa).

27–32 (GTGKTT) contributes to the ATP binding site. Thr31 contributes to the Mg(2+) binding site. Positions 49, 73, and 95 each coordinate substrate. Arg133 contributes to the ATP binding site. Residue Arg152 coordinates substrate.

Belongs to the shikimate kinase family. Monomer. Mg(2+) is required as a cofactor.

The protein resides in the cytoplasm. It carries out the reaction shikimate + ATP = 3-phosphoshikimate + ADP + H(+). It functions in the pathway metabolic intermediate biosynthesis; chorismate biosynthesis; chorismate from D-erythrose 4-phosphate and phosphoenolpyruvate: step 5/7. Catalyzes the specific phosphorylation of the 3-hydroxyl group of shikimic acid using ATP as a cosubstrate. The protein is Shikimate kinase of Hahella chejuensis (strain KCTC 2396).